A 255-amino-acid polypeptide reads, in one-letter code: Hydroxyacylglutathione hydrolase (255 aa).

Residues His53, His55, Asp57, His58, His110, Asp127, and His165 each coordinate Zn(2+).

The protein belongs to the metallo-beta-lactamase superfamily. Glyoxalase II family. As to quaternary structure, monomer. Zn(2+) is required as a cofactor.

The enzyme catalyses an S-(2-hydroxyacyl)glutathione + H2O = a 2-hydroxy carboxylate + glutathione + H(+). It participates in secondary metabolite metabolism; methylglyoxal degradation; (R)-lactate from methylglyoxal: step 2/2. Functionally, thiolesterase that catalyzes the hydrolysis of S-D-lactoyl-glutathione to form glutathione and D-lactic acid. The sequence is that of Hydroxyacylglutathione hydrolase from Xanthomonas axonopodis pv. citri (strain 306).